Consider the following 204-residue polypeptide: Cold and drought-regulated protein CORA (204 aa).

18 tandem repeats follow at residues 54-59 (YNHGGG), 65-70 (YNHGGG), 71-76 (YNHGGG), 78-83 (YHNGGG), 85-90 (YNHGGG), 98-100 (HGG), 101-103 (HGG), 112-114 (HGG), 115-117 (HGG), 126-128 (HGG), 129-131 (HGG), 164-169 (YNHGGG), 171-176 (YNHGGG), 178-180 (HGG), 181-183 (HGG), 184-186 (HGG), 187-189 (HGG), and 190-192 (HGG). Residues 54 to 176 (YNHGGGYNGG…GGGGYNHGGG (123 aa)) form a 7 X 6 AA repeats of Y-N-H-G-G-G region. Residues 98–192 (HGGHGGGGYN…GHGGHGGHGG (95 aa)) are 11 X 3 AA repeats of H-G-G. Residues 169 to 194 (GGYNHGGGGHGGHGGHGGHGGHGGHG) show a composition bias toward gly residues. Positions 169–204 (GGYNHGGGGHGGHGGHGGHGGHGGHGAVQTEDNTQN) are disordered.

This sequence belongs to the GRP family.

In terms of biological role, may be involved in resistance of the plant to environmental stress. The sequence is that of Cold and drought-regulated protein CORA (CORA) from Medicago sativa (Alfalfa).